The sequence spans 217 residues: Somatotropin (217 aa).

A signal peptide spans 1 to 26; sequence MAPGSRTSLLLAFGLLCLPWLQEGSA. Zn(2+) is bound at residue H44. C79 and C191 form a disulfide bridge. S132 is subject to Phosphoserine. E200 is a binding site for Zn(2+). Cysteines 208 and 215 form a disulfide.

Belongs to the somatotropin/prolactin family.

Its subcellular location is the secreted. Plays an important role in growth control. Its major role in stimulating body growth is to stimulate the liver and other tissues to secrete IGF1. It stimulates both the differentiation and proliferation of myoblasts. It also stimulates amino acid uptake and protein synthesis in muscle and other tissues. The protein is Somatotropin (GH1) of Pan troglodytes (Chimpanzee).